A 258-amino-acid polypeptide reads, in one-letter code: Acyl-[acyl-carrier-protein]--UDP-N-acetylglucosamine O-acyltransferase (258 aa).

The protein belongs to the transferase hexapeptide repeat family. LpxA subfamily. Homotrimer.

It localises to the cytoplasm. It carries out the reaction a (3R)-hydroxyacyl-[ACP] + UDP-N-acetyl-alpha-D-glucosamine = a UDP-3-O-[(3R)-3-hydroxyacyl]-N-acetyl-alpha-D-glucosamine + holo-[ACP]. It participates in glycolipid biosynthesis; lipid IV(A) biosynthesis; lipid IV(A) from (3R)-3-hydroxytetradecanoyl-[acyl-carrier-protein] and UDP-N-acetyl-alpha-D-glucosamine: step 1/6. Involved in the biosynthesis of lipid A, a phosphorylated glycolipid that anchors the lipopolysaccharide to the outer membrane of the cell. This chain is Acyl-[acyl-carrier-protein]--UDP-N-acetylglucosamine O-acyltransferase, found in Pseudomonas fluorescens (strain Pf0-1).